We begin with the raw amino-acid sequence, 51 residues long: Large ribosomal subunit protein eL39 (51 aa).

It belongs to the eukaryotic ribosomal protein eL39 family.

This chain is Large ribosomal subunit protein eL39, found in Saccharolobus islandicus (strain L.S.2.15 / Lassen #1) (Sulfolobus islandicus).